The primary structure comprises 220 residues: Kinetochore protein Spc25 (220 aa).

Residues 79 to 114 (HLTQEVEAIKLRNLAMKDQIKQQKMLNNQRKNEIME) adopt a coiled-coil conformation.

This sequence belongs to the SPC25 family. In terms of assembly, component of the Ndc80 complex, which is composed of Ndc80, Nuf2 and Spc25.

It localises to the nucleus. It is found in the chromosome. The protein localises to the centromere. Its subcellular location is the kinetochore. Functionally, acts as a component of the essential kinetochore-associated Ndc80 complex, which is required for chromosome segregation and spindle checkpoint activity during meiosis and mitosis. Required for kinetochore integrity and the organization of stable microtubule binding sites in the outer plate of the kinetochore. Participates in SAC signaling that responds specifically to disruptions in spindle microtubule dynamics. The NDC80 complex synergistically enhances the affinity of the SKA1 complex for microtubules and may allow the NDC80 complex to track depolymerizing microtubules. In Drosophila orena (Fruit fly), this protein is Kinetochore protein Spc25.